The sequence spans 487 residues: UDP-N-acetylmuramoyl-L-alanyl-D-glutamate--2,6-diaminopimelate ligase (487 aa).

The UDP-N-acetyl-alpha-D-muramoyl-L-alanyl-D-glutamate site is built by Leu23 and Ser25. 108–114 (GTNGKTS) provides a ligand contact to ATP. UDP-N-acetyl-alpha-D-muramoyl-L-alanyl-D-glutamate contacts are provided by residues 150–151 (TT), Ser177, Gln183, and Arg185. Lys217 is modified (N6-carboxylysine). Meso-2,6-diaminopimelate contacts are provided by residues Arg378, 402–405 (DNPR), Gly453, and Glu457. The Meso-diaminopimelate recognition motif signature appears at 402-405 (DNPR).

It belongs to the MurCDEF family. MurE subfamily. It depends on Mg(2+) as a cofactor. In terms of processing, carboxylation is probably crucial for Mg(2+) binding and, consequently, for the gamma-phosphate positioning of ATP.

Its subcellular location is the cytoplasm. The catalysed reaction is UDP-N-acetyl-alpha-D-muramoyl-L-alanyl-D-glutamate + meso-2,6-diaminopimelate + ATP = UDP-N-acetyl-alpha-D-muramoyl-L-alanyl-gamma-D-glutamyl-meso-2,6-diaminopimelate + ADP + phosphate + H(+). It functions in the pathway cell wall biogenesis; peptidoglycan biosynthesis. In terms of biological role, catalyzes the addition of meso-diaminopimelic acid to the nucleotide precursor UDP-N-acetylmuramoyl-L-alanyl-D-glutamate (UMAG) in the biosynthesis of bacterial cell-wall peptidoglycan. This chain is UDP-N-acetylmuramoyl-L-alanyl-D-glutamate--2,6-diaminopimelate ligase, found in Pseudomonas syringae pv. tomato (strain ATCC BAA-871 / DC3000).